The following is a 119-amino-acid chain: Large ribosomal subunit protein uL24 (119 aa).

The protein belongs to the universal ribosomal protein uL24 family. In terms of assembly, part of the 50S ribosomal subunit.

Its function is as follows. One of two assembly initiator proteins, it binds directly to the 5'-end of the 23S rRNA, where it nucleates assembly of the 50S subunit. Functionally, one of the proteins that surrounds the polypeptide exit tunnel on the outside of the subunit. The chain is Large ribosomal subunit protein uL24 from Leifsonia xyli subsp. xyli (strain CTCB07).